A 114-amino-acid polypeptide reads, in one-letter code: MSYSLKTIEEHFVPYSIAKKYIKELIDTGSSSNLIQKTFDYLNSISRCDEDSASKIMKELEEIVKREDVRAVLASICPTTVEEVRSVLVIDPSTIYSTEQIQKIIEIIKKYVES.

It belongs to the eukaryotic RPB4 RNA polymerase subunit family. In terms of assembly, part of the 13-subunit RNA polymerase complex. Forms a stalk with Rpo7 that extends from the main structure. In terms of processing, in purified enzyme appears as 5 forms, each differing by about 200 Da of a covalently bound, negatively charged residue. Not glycosylated.

It is found in the cytoplasm. It catalyses the reaction RNA(n) + a ribonucleoside 5'-triphosphate = RNA(n+1) + diphosphate. In terms of biological role, DNA-dependent RNA polymerase catalyzes the transcription of DNA into RNA using the four ribonucleoside triphosphates as substrates. This subunit is less well bound than the others. Probably not involved in transcription initiation. The sequence is that of DNA-directed RNA polymerase subunit Rpo4 from Sulfolobus acidocaldarius (strain ATCC 33909 / DSM 639 / JCM 8929 / NBRC 15157 / NCIMB 11770).